The chain runs to 466 residues: MAKTLYDKVWQAHIIDQIGEDSLIYIDRHLIHEVTSPQAFAGLNEKGRKVRRPDRTVGTMDHSISTRSLAIDACGPANALQLQTLAKNCEEHNIQLFPVGHQKQGIVHVMGPELGLIQPGMTVVCGDSHTATHGAFGALAFGIGTSQVEHVLATQTLKQSRAKSMLINVNGKLPVGITAKDIILAIIGKIGHAGATGHVIEYAGEAIRGLSMEERMTVCNMSIEAGAKAGLVAPDEKTFAYLEGREYAPKGQDWEDAVAYWKTLYTEEGAKFDTVVELEAADIAPQVTWGTNPGQVIGVNTPVPAPEDFSDPIEKESAVKALEYMGLKPGEKLADIPVNHVFIGSCTNGRIEDMRAAAQVAKRGKVADSVTAIVVPGSGAVKRQAEAEGLDKIFTDAGFEWRLPGCSMCLGMNDDKLVAGDRCASTSNRNFEGRQGRGARTHLVSPAMAAAAAITGRFADVRDYQE.

Residues Cys346, Cys406, and Cys409 each contribute to the [4Fe-4S] cluster site.

This sequence belongs to the aconitase/IPM isomerase family. LeuC type 1 subfamily. As to quaternary structure, heterodimer of LeuC and LeuD. It depends on [4Fe-4S] cluster as a cofactor.

It catalyses the reaction (2R,3S)-3-isopropylmalate = (2S)-2-isopropylmalate. The protein operates within amino-acid biosynthesis; L-leucine biosynthesis; L-leucine from 3-methyl-2-oxobutanoate: step 2/4. Catalyzes the isomerization between 2-isopropylmalate and 3-isopropylmalate, via the formation of 2-isopropylmaleate. In Alteromonas mediterranea (strain DSM 17117 / CIP 110805 / LMG 28347 / Deep ecotype), this protein is 3-isopropylmalate dehydratase large subunit.